Reading from the N-terminus, the 145-residue chain is Large ribosomal subunit protein uL11 (145 aa).

It belongs to the universal ribosomal protein uL11 family. In terms of assembly, part of the ribosomal stalk of the 50S ribosomal subunit. Interacts with L10 and the large rRNA to form the base of the stalk. L10 forms an elongated spine to which L12 dimers bind in a sequential fashion forming a multimeric L10(L12)X complex. One or more lysine residues are methylated.

Its function is as follows. Forms part of the ribosomal stalk which helps the ribosome interact with GTP-bound translation factors. The sequence is that of Large ribosomal subunit protein uL11 from Rickettsia africae (strain ESF-5).